The chain runs to 360 residues: Peptide chain release factor 1 (360 aa).

Q236 carries the post-translational modification N5-methylglutamine.

The protein belongs to the prokaryotic/mitochondrial release factor family. Post-translationally, methylated by PrmC. Methylation increases the termination efficiency of RF1.

It localises to the cytoplasm. Peptide chain release factor 1 directs the termination of translation in response to the peptide chain termination codons UAG and UAA. The polypeptide is Peptide chain release factor 1 (Lactiplantibacillus plantarum (strain ATCC BAA-793 / NCIMB 8826 / WCFS1) (Lactobacillus plantarum)).